A 400-amino-acid polypeptide reads, in one-letter code: Phosphoglycerate kinase (400 aa).

Substrate-binding positions include 19–21 (DLN), arginine 38, 61–64 (HLGR), arginine 124, and arginine 161. ATP is bound by residues lysine 211, glycine 299, glutamate 330, and 356-359 (GGDS).

The protein belongs to the phosphoglycerate kinase family. Monomer.

It localises to the cytoplasm. It catalyses the reaction (2R)-3-phosphoglycerate + ATP = (2R)-3-phospho-glyceroyl phosphate + ADP. It participates in carbohydrate degradation; glycolysis; pyruvate from D-glyceraldehyde 3-phosphate: step 2/5. This chain is Phosphoglycerate kinase, found in Frankia alni (strain DSM 45986 / CECT 9034 / ACN14a).